We begin with the raw amino-acid sequence, 382 residues long: MLNMESAGVSAAMAGLSKSLTTPFSINDILTRSNPETRRMSSVDSEPEPEKLKPSSDRERSISKSPPLCCRDLGLYKLTQPKEIQPSARQPSNYLQYYAAAMDNNNHHHQATGTSNSSAADYMQRKLAYFGSTLAAPLDMRRCTSNDSDCDSPPPLSSSPSESPLSHDGSGLSRKKRSRAAFSHAQVFELERRFAQQRYLSGPERSEMAKSLRLTETQVKIWFQNRRYKTKRKQIQQHEAALLGASKRVPVQVLVREDGSTTYAHMAAPGAGHGLDPALINIYRHQLQLAYGGLPLPQMQMPFPYFYPQHKVPQPIPPPTQSSSFVTASSASSSPVPIPIPGAVRPQRTPCPSPNGQMMSVESGAESVHSAAEDVDENVEID.

Disordered stretches follow at residues 27-66 (NDIL…SKSP), 144-178 (TSND…KKRS), and 314-382 (QPIP…VEID). Basic and acidic residues predominate over residues 48-62 (EPEKLKPSSDRERSI). The span at 158 to 170 (SSPSESPLSHDGS) shows a compositional bias: low complexity. Positions 175–234 (KKRSRAAFSHAQVFELERRFAQQRYLSGPERSEMAKSLRLTETQVKIWFQNRRYKTKRKQ) form a DNA-binding region, homeobox. Positions 321-335 (QSSSFVTASSASSSP) are enriched in low complexity. The segment covering 373–382 (EDVDENVEID) has biased composition (acidic residues).

The protein belongs to the NK-3 homeobox family. As to expression, is expressed in a segmented pattern in visceral muscle and in a subset of cardiac muscles. Loss of activity results in segmental gaps in midgut visceral muscle.

The protein localises to the nucleus. Functionally, involved in the determination of cell fates in the dorsal mesoderm. The chain is Homeobox protein bagpipe (bap) from Drosophila melanogaster (Fruit fly).